The sequence spans 91 residues: Protein SPATA45 homolog (91 aa).

The interval 42 to 91 (RADRKHDPNGFNSSVFKGASNQHQESSLDFATAEPEFHRERRHFPEKSEY) is disordered. Residues 51–70 (GFNSSVFKGASNQHQESSLD) show a composition bias toward polar residues. Residues 76–91 (PEFHRERRHFPEKSEY) are compositionally biased toward basic and acidic residues.

The protein belongs to the SPATA45 family.

The protein is Protein SPATA45 homolog of Nematostella vectensis (Starlet sea anemone).